A 468-amino-acid polypeptide reads, in one-letter code: Probable Xaa-Pro aminopeptidase PEPP (468 aa).

Residues D264, D275, E398, and E438 each contribute to the Mn(2+) site.

This sequence belongs to the peptidase M24B family. Mn(2+) serves as cofactor.

It catalyses the reaction Release of any N-terminal amino acid, including proline, that is linked to proline, even from a dipeptide or tripeptide.. In terms of biological role, catalyzes the removal of a penultimate prolyl residue from the N-termini of peptides. The chain is Probable Xaa-Pro aminopeptidase PEPP (PEPP) from Paracoccidioides brasiliensis (strain Pb03).